The sequence spans 774 residues: Ion-translocating oxidoreductase complex subunit C (774 aa).

2 consecutive 4Fe-4S ferredoxin-type domains span residues 359 to 389 and 399 to 428; these read ELPEPVPAMPCIRCGDCAQVCPVSLLPQQLH and QLLAHNLFDCIECGACAYVCPSSIPLVQYY. 8 residues coordinate [4Fe-4S] cluster: Cys369, Cys372, Cys375, Cys379, Cys408, Cys411, Cys414, and Cys418. The span at 453-490 shows a compositional bias: basic and acidic residues; that stretch reads EQRQARLRRDEERRAAERAQRAEKAALARAAQAEREEA. The disordered stretch occupies residues 453 to 493; sequence EQRQARLRRDEERRAAERAQRAEKAALARAAQAEREEAAPA.

It belongs to the 4Fe4S bacterial-type ferredoxin family. RnfC subfamily. The complex is composed of six subunits: RnfA, RnfB, RnfC, RnfD, RnfE and RnfG. Requires [4Fe-4S] cluster as cofactor.

The protein localises to the cell inner membrane. In terms of biological role, part of a membrane-bound complex that couples electron transfer with translocation of ions across the membrane. The chain is Ion-translocating oxidoreductase complex subunit C from Pseudomonas aeruginosa (strain ATCC 15692 / DSM 22644 / CIP 104116 / JCM 14847 / LMG 12228 / 1C / PRS 101 / PAO1).